A 201-amino-acid chain; its full sequence is Recombination protein RecR (201 aa).

The segment at cysteine 60–cysteine 75 adopts a C4-type zinc-finger fold. Positions serine 83 to proline 178 constitute a Toprim domain.

This sequence belongs to the RecR family.

In terms of biological role, may play a role in DNA repair. It seems to be involved in an RecBC-independent recombinational process of DNA repair. It may act with RecF and RecO. This Allorhizobium ampelinum (strain ATCC BAA-846 / DSM 112012 / S4) (Agrobacterium vitis (strain S4)) protein is Recombination protein RecR.